We begin with the raw amino-acid sequence, 553 residues long: Protein Early 65 kDa (553 aa).

It is found in the host cytoplasm. May participate in the recruitment of G-actin to the host nucleus. This chain is Protein Early 65 kDa (HE65), found in Autographa californica nuclear polyhedrosis virus (AcMNPV).